Consider the following 426-residue polypeptide: Enolase (426 aa).

Gln-163 serves as a coordination point for (2R)-2-phosphoglycerate. The active-site Proton donor is Glu-205. Mg(2+) is bound by residues Asp-242, Glu-283, and Asp-310. (2R)-2-phosphoglycerate contacts are provided by Lys-335, Arg-364, Ser-365, and Lys-386. Lys-335 functions as the Proton acceptor in the catalytic mechanism.

This sequence belongs to the enolase family. Mg(2+) is required as a cofactor.

It localises to the cytoplasm. Its subcellular location is the secreted. The protein resides in the cell surface. It catalyses the reaction (2R)-2-phosphoglycerate = phosphoenolpyruvate + H2O. It functions in the pathway carbohydrate degradation; glycolysis; pyruvate from D-glyceraldehyde 3-phosphate: step 4/5. Its function is as follows. Catalyzes the reversible conversion of 2-phosphoglycerate (2-PG) into phosphoenolpyruvate (PEP). It is essential for the degradation of carbohydrates via glycolysis. In Leifsonia xyli subsp. xyli (strain CTCB07), this protein is Enolase.